The following is a 58-amino-acid chain: Small ribosomal subunit protein bS21 (58 aa).

Over residues 32 to 42 (ARRREHYEKPS) the composition is skewed to basic and acidic residues. The disordered stretch occupies residues 32-58 (ARRREHYEKPSVRRKKKSEAARKRRWH). A compositionally biased stretch (basic residues) spans 43–58 (VRRKKKSEAARKRRWH).

Belongs to the bacterial ribosomal protein bS21 family.

This Moorella thermoacetica (strain ATCC 39073 / JCM 9320) protein is Small ribosomal subunit protein bS21.